A 320-amino-acid chain; its full sequence is Zygote arrest protein 1 (320 aa).

2 disordered regions span residues 106–130 (ELRR…EVRY) and 155–208 (DRPA…AEGS). Residues 222–305 (KYGYYHCREC…RQDLCGRCKG (84 aa)) form a 3CxxC-type zinc finger.

The protein belongs to the ZAR1 family.

Its subcellular location is the cytoplasm. It is found in the cytoplasmic ribonucleoprotein granule. In terms of biological role, mRNA-binding protein required for maternal mRNA storage, translation and degradation during oocyte maturation. Probably promotes formation of some phase-separated membraneless compartment that stores maternal mRNAs in oocytes: acts by undergoing liquid-liquid phase separation upon binding to maternal mRNAs. Binds to the 3'-UTR of maternal mRNAs, inhibiting their translation. The sequence is that of Zygote arrest protein 1 from Takifugu rubripes (Japanese pufferfish).